A 254-amino-acid chain; its full sequence is ATP synthase subunit a (254 aa).

Residues 1 to 6 (MAFLIH) constitute a propeptide, removed in mature form. The next 7 helical transmembrane spans lie at 32–52 (LTNL…LHIM), 83–103 (IGAA…FILI), 119–139 (SIMV…ILGL), 146–166 (FFSF…LVPI), 182–202 (LFAN…FLAP), 207–227 (TFII…IIGL), and 228–248 (EIAV…SYLK).

The protein belongs to the ATPase A chain family. F-type ATPases have 2 components, CF(1) - the catalytic core - and CF(0) - the membrane proton channel. CF(1) has five subunits: alpha(3), beta(3), gamma(1), delta(1), epsilon(1). CF(0) has three main subunits: a, b and c.

The protein localises to the mitochondrion inner membrane. Mitochondrial membrane ATP synthase (F(1)F(0) ATP synthase or Complex V) produces ATP from ADP in the presence of a proton gradient across the membrane which is generated by electron transport complexes of the respiratory chain. F-type ATPases consist of two structural domains, F(1) - containing the extramembraneous catalytic core and F(0) - containing the membrane proton channel, linked together by a central stalk and a peripheral stalk. During catalysis, ATP synthesis in the catalytic domain of F(1) is coupled via a rotary mechanism of the central stalk subunits to proton translocation. Key component of the proton channel; it may play a direct role in the translocation of protons across the membrane. This chain is ATP synthase subunit a (ATP6), found in Mycosarcoma maydis (Corn smut fungus).